A 146-amino-acid chain; its full sequence is D-aminoacyl-tRNA deacylase (146 aa).

The Gly-cisPro motif, important for rejection of L-amino acids motif lies at 137-138 (GP).

It belongs to the DTD family. As to quaternary structure, homodimer.

The protein resides in the cytoplasm. The enzyme catalyses glycyl-tRNA(Ala) + H2O = tRNA(Ala) + glycine + H(+). It carries out the reaction a D-aminoacyl-tRNA + H2O = a tRNA + a D-alpha-amino acid + H(+). In terms of biological role, an aminoacyl-tRNA editing enzyme that deacylates mischarged D-aminoacyl-tRNAs. Also deacylates mischarged glycyl-tRNA(Ala), protecting cells against glycine mischarging by AlaRS. Acts via tRNA-based rather than protein-based catalysis; rejects L-amino acids rather than detecting D-amino acids in the active site. By recycling D-aminoacyl-tRNA to D-amino acids and free tRNA molecules, this enzyme counteracts the toxicity associated with the formation of D-aminoacyl-tRNA entities in vivo and helps enforce protein L-homochirality. In Bacillus cereus (strain ATCC 14579 / DSM 31 / CCUG 7414 / JCM 2152 / NBRC 15305 / NCIMB 9373 / NCTC 2599 / NRRL B-3711), this protein is D-aminoacyl-tRNA deacylase.